Here is a 237-residue protein sequence, read N- to C-terminus: Derlin-2 (237 aa).

Over 1 to 20 the chain is Cytoplasmic; the sequence is MNGVVAALEEMPPVTRFYTG. A helical membrane pass occupies residues 21–41; it reads ACVLLTTAVHLEFVTPFHLYF. Topologically, residues 42 to 54 are lumenal; that stretch reads NWELIIRKYQFWR. A helical membrane pass occupies residues 55–75; sequence LITSFCFFGSFGFSFLFNMIF. The Cytoplasmic segment spans residues 76 to 97; sequence TYRYCMMLEEGSFRGRRADFVY. Residues 98 to 118 form a helical membrane-spanning segment; it reads MFLFGAVLMILSGIFVQILFL. The Lumenal segment spans residues 119–166; the sequence is GQAFTIMLVYIWSRRNPMIQMNFFGVLTFTAPYLPWVLLLFSLLLGNN. A helical membrane pass occupies residues 167–187; sequence AVVDFMGIACGHIYFFLEDVF. Over 188 to 237 the chain is Cytoplasmic; that stretch reads PFQEHGKRFLKTPQWLVYLFDERRPEPLPEDERPGGFEWGDEQPEQEQHD. Residues 212–222 are compositionally biased toward basic and acidic residues; that stretch reads PEPLPEDERPG. The tract at residues 212-237 is disordered; sequence PEPLPEDERPGGFEWGDEQPEQEQHD. Residues 226-237 show a composition bias toward acidic residues; sequence WGDEQPEQEQHD.

This sequence belongs to the derlin family.

Its subcellular location is the endoplasmic reticulum membrane. In terms of biological role, may be required for the degradation process of some specific misfolded endoplasmic reticulum (ER) luminal proteins. Participates in the transfer of misfolded proteins from the ER to the cytosol, where they are destroyed by the proteasome in a ubiquitin-dependent manner. Its precise function remains unclear, but its ability to complement der1 mutations in C.cerevisiae, suggests a similar function in the degradation of ER misfolded proteins. This chain is Derlin-2, found in Caenorhabditis elegans.